The primary structure comprises 561 residues: MACPF domain-containing protein CAD1 (561 aa).

The region spanning Val11–Leu314 is the MACPF domain. A disordered region spans residues Val489 to Gly514. The segment covering Pro500–Ser513 has biased composition (polar residues).

The protein belongs to the complement C6/C7/C8/C9 (TC 1.C.39) family. As to expression, mainly expressed in the vascular system.

Functionally, negatively controls the salicylic acid (SA)-mediated pathway of programmed cell death in plant immunity. The polypeptide is MACPF domain-containing protein CAD1 (CAD1) (Arabidopsis thaliana (Mouse-ear cress)).